The chain runs to 144 residues: Large ribosomal subunit protein uL13 (144 aa).

This sequence belongs to the universal ribosomal protein uL13 family. In terms of assembly, part of the 50S ribosomal subunit.

Its function is as follows. This protein is one of the early assembly proteins of the 50S ribosomal subunit, although it is not seen to bind rRNA by itself. It is important during the early stages of 50S assembly. The chain is Large ribosomal subunit protein uL13 from Mesomycoplasma hyopneumoniae (strain 232) (Mycoplasma hyopneumoniae).